The sequence spans 93 residues: Large ribosomal subunit protein bL27 (93 aa).

A disordered region spans residues 1–22; that stretch reads MAHKKAGGSSRNGRDSEGRRLG.

It belongs to the bacterial ribosomal protein bL27 family.

The chain is Large ribosomal subunit protein bL27 from Methylobacterium sp. (strain 4-46).